The sequence spans 125 residues: Methylglyoxal synthase (125 aa).

The MGS-like domain occupies 1-125 (MTERLRIALI…TAEKLIKALD (125 aa)). Substrate contacts are provided by residues H12, K16, 38–41 (TGTT), and 59–60 (SG). D65 functions as the Proton donor/acceptor in the catalytic mechanism. A substrate-binding site is contributed by H92.

The protein belongs to the methylglyoxal synthase family.

The catalysed reaction is dihydroxyacetone phosphate = methylglyoxal + phosphate. Catalyzes the formation of methylglyoxal from dihydroxyacetone phosphate. The chain is Methylglyoxal synthase from Brucella anthropi (strain ATCC 49188 / DSM 6882 / CCUG 24695 / JCM 21032 / LMG 3331 / NBRC 15819 / NCTC 12168 / Alc 37) (Ochrobactrum anthropi).